Reading from the N-terminus, the 234-residue chain is t-SNARE protein aex-4 (234 aa).

T-SNARE coiled-coil homology domains are found at residues 37–99 and 170–232; these read AKLN…ITAM and DAIE…VKKL.

It belongs to the SNAP-25 family. Expressed in intestinal cells.

It localises to the cell membrane. Its function is as follows. t-SNARE protein which regulates the secretion of aex-5 from intestinal cells. Involved in the defecation motor program, which is a coordinated series of three muscle contractions that occurs every 45 seconds. The protein is t-SNARE protein aex-4 of Caenorhabditis elegans.